Reading from the N-terminus, the 915-residue chain is Probable LRR receptor-like serine/threonine-protein kinase At2g16250 (915 aa).

The first 28 residues, 1–28, serve as a signal peptide directing secretion; that stretch reads MVDQRRSALGFVLLLLCLVLFFDCVVVG. Residues 29–451 lie on the Extracellular side of the membrane; it reads QTQSRFSEKL…ISRRTVIILA (423 aa). Asn-71, Asn-78, Asn-101, Asn-109, Asn-150, Asn-158, and Asn-177 each carry an N-linked (GlcNAc...) asparagine glycan. LRR repeat units follow at residues 102–125, 127–150, 151–174, 176–198, 199–223, 225–247, 248–271, 272–295, 297–320, 321–344, and 366–390; these read LTRLSYFNASGLALPGTIPEWFGV, LLALEVLDLSSCSVNGVVPFTLGN, LTSLRTLNLSQNSLTSLVPSSLGQ, LNLSQLDLSRNSFTGVLPQSFSS, LKNLLTLDVSSNYLTGPIPPGLGAL, KLIHLNFSSNSFSSPIPSELGDL, VNLVDFDLSINSLSGSVPQELRKL, SKLQLMAIGDNLLSGTLPVDLFSA, SQLQTLVLRENGFSGSLPDVCWSL, PKLRILDIAKNNFTGLLPYSSYDS, and LRRFRIMDLSGNYFEGKLPDYVTGE. A glycan (N-linked (GlcNAc...) asparagine) is linked at Asn-230. An N-linked (GlcNAc...) asparagine glycan is attached at Asn-332. Asn-391, Asn-429, and Asn-437 each carry an N-linked (GlcNAc...) asparagine glycan. A helical transmembrane segment spans residues 452 to 472; sequence AVGGGVAFILLFVILPIILVL. Topologically, residues 473–915 are cytoplasmic; it reads CMRHRRRAAQ…AAYGVVEDNL (443 aa). The tract at residues 482–503 is disordered; it reads QRGNNDRPKPAGEASQQPPKGA. Residues 527–811 enclose the Protein kinase domain; that stretch reads FNDANLIKRG…IVNALENPLK (285 aa). ATP-binding positions include 533-541 and Lys-555; that span reads IKRGHSGNL. Asp-657 acts as the Proton acceptor in catalysis. A disordered region spans residues 851–915; sequence TAVQAGATTS…AAYGVVEDNL (65 aa). Positions 859–870 are enriched in gly residues; that stretch reads TSGGGGGGGGNG. The span at 871–892 shows a compositional bias: low complexity; sequence LRNSGSQGSSGRNNNNNGNSSS.

This sequence belongs to the protein kinase superfamily. Ser/Thr protein kinase family.

The protein resides in the membrane. The enzyme catalyses L-seryl-[protein] + ATP = O-phospho-L-seryl-[protein] + ADP + H(+). It catalyses the reaction L-threonyl-[protein] + ATP = O-phospho-L-threonyl-[protein] + ADP + H(+). The protein is Probable LRR receptor-like serine/threonine-protein kinase At2g16250 of Arabidopsis thaliana (Mouse-ear cress).